Reading from the N-terminus, the 515-residue chain is ATP synthase subunit alpha (515 aa).

Residue 169 to 176 (GDRQTGKT) participates in ATP binding.

The protein belongs to the ATPase alpha/beta chains family. In terms of assembly, F-type ATPases have 2 components, CF(1) - the catalytic core - and CF(0) - the membrane proton channel. CF(1) has five subunits: alpha(3), beta(3), gamma(1), delta(1), epsilon(1). CF(0) has three main subunits: a(1), b(2) and c(9-12). The alpha and beta chains form an alternating ring which encloses part of the gamma chain. CF(1) is attached to CF(0) by a central stalk formed by the gamma and epsilon chains, while a peripheral stalk is formed by the delta and b chains.

Its subcellular location is the cell inner membrane. It catalyses the reaction ATP + H2O + 4 H(+)(in) = ADP + phosphate + 5 H(+)(out). Functionally, produces ATP from ADP in the presence of a proton gradient across the membrane. The alpha chain is a regulatory subunit. This chain is ATP synthase subunit alpha, found in Neisseria meningitidis serogroup A / serotype 4A (strain DSM 15465 / Z2491).